The following is a 298-amino-acid chain: Tyrosine recombinase XerD (298 aa).

The region spanning 2–87 (KQELARIEQF…AVRRLFQYLY (86 aa)) is the Core-binding (CB) domain. One can recognise a Tyr recombinase domain in the interval 108 to 292 (RLPKDLSEAQ…ATERLRQLHQ (185 aa)). Residues Arg148, Lys172, His244, Arg247, and His270 contribute to the active site. The active-site O-(3'-phospho-DNA)-tyrosine intermediate is the Tyr279.

This sequence belongs to the 'phage' integrase family. XerD subfamily. In terms of assembly, forms a cyclic heterotetrameric complex composed of two molecules of XerC and two molecules of XerD, in which XerC interacts with XerD via its C-terminal region, XerD interacts with XerC via its C-terminal region and so on.

The protein resides in the cytoplasm. FtsK may regulate the catalytic switch between XerC and XerD in the heterotetrameric complex during the two steps of the recombination process. In terms of biological role, site-specific tyrosine recombinase, which acts by catalyzing the cutting and rejoining of the recombining DNA molecules. Binds cooperatively to specific DNA consensus sequences that are separated from XerC binding sites by a short central region, forming the heterotetrameric XerC-XerD complex that recombines DNA substrates. The complex is essential to convert dimers of the bacterial chromosome into monomers to permit their segregation at cell division. It also contributes to the segregational stability of plasmids. In the complex XerD specifically exchanges the bottom DNA strands. This is Tyrosine recombinase XerD from Shigella flexneri.